A 142-amino-acid polypeptide reads, in one-letter code: Hemoglobin subunit alpha (142 aa).

Serine 1 is modified (N-acetylserine). Residues serine 1–arginine 142 form the Globin domain. Histidine 59 lines the O2 pocket. Histidine 88 serves as a coordination point for heme b.

The protein belongs to the globin family. In terms of assembly, heterotetramer of two alpha chains and two beta chains. Red blood cells.

Its function is as follows. Involved in oxygen transport from gills to the various peripheral tissues. The protein is Hemoglobin subunit alpha (hba) of Electrophorus electricus (Electric eel).